The primary structure comprises 245 residues: Ribonuclease 3 (245 aa).

The region spanning 18 to 146 (LSEFLENLSI…FVGAIYLDSG (129 aa)) is the RNase III domain. E59 is a binding site for Mg(2+). D63 is an active-site residue. D132 and E135 together coordinate Mg(2+). Residue E135 is part of the active site. The DRBM domain occupies 173–242 (DYKSLLQEYV…AEVALKAMED (70 aa)).

It belongs to the ribonuclease III family. As to quaternary structure, homodimer. Mg(2+) serves as cofactor.

It is found in the cytoplasm. The enzyme catalyses Endonucleolytic cleavage to 5'-phosphomonoester.. Digests double-stranded RNA. Involved in the processing of primary rRNA transcript to yield the immediate precursors to the large and small rRNAs (23S and 16S). Processes some mRNAs, and tRNAs when they are encoded in the rRNA operon. Processes pre-crRNA and tracrRNA of type II CRISPR loci if present in the organism. This Borreliella afzelii (strain PKo) (Borrelia afzelii) protein is Ribonuclease 3.